The sequence spans 190 residues: UPF0316 protein Mboo_0605 (190 aa).

Transmembrane regions (helical) follow at residues isoleucine 3–glutamate 23, leucine 41–leucine 61, and phenylalanine 67–isoleucine 87.

It belongs to the UPF0316 family.

It localises to the cell membrane. This chain is UPF0316 protein Mboo_0605, found in Methanoregula boonei (strain DSM 21154 / JCM 14090 / 6A8).